We begin with the raw amino-acid sequence, 163 residues long: Adenosine 5'-monophosphoramidase HINT2 (163 aa).

Residues 1 to 17 (MAAAVVLAAGLCVARRA) constitute a mitochondrion transit peptide. An HIT domain is found at 55–163 (IFSRILDRSL…GGRQLQWPPG (109 aa)). AMP is bound by residues Ser63 and Asp80. Lys119 is subject to N6-acetyllysine. Asn136 serves as a coordination point for AMP. Lys139 bears the N6-acetyllysine mark. AMP is bound by residues 142-145 (AQSV) and 149-151 (HIH). Positions 147–151 (HLHIH) match the Histidine triad motif motif. The active-site Tele-AMP-histidine intermediate is His149.

Belongs to the HINT family.

The protein localises to the mitochondrion. It carries out the reaction adenosine 5'-phosphoramidate + H2O = AMP + NH4(+). In terms of biological role, exhibits adenosine 5'-monophosphoramidase activity, hydrolyzing purine nucleotide phosphoramidates with a single phosphate group such as adenosine 5'monophosphoramidate (AMP-NH2) to yield AMP and NH2. Hydrolyzes adenosine 5'-O-p-nitrophenylphosphoramidate (AMP-pNA). May be involved in steroid biosynthesis. May play a role in apoptosis. The chain is Adenosine 5'-monophosphoramidase HINT2 from Bos taurus (Bovine).